Consider the following 335-residue polypeptide: Matrix protein (335 aa).

This sequence belongs to the morbillivirus/respirovirus/rubulavirus M protein family. Homodimer. Dimerization is critical for virion formation. Interacts with host ANP32B.

It is found in the virion. It localises to the host cell membrane. In terms of biological role, the M protein has a crucial role in virus assembly and interacts with the RNP complex as well as with the viral membrane. Associates with phosphatidylserine (PS) and phosphatidylinositol 4,5-bisphosphate (PIP2) at the plasma membrane. Interaction with PIP2 triggers matrix protein lattice polymerization. Matrix proteins induce host membrane deformation and curvature necessary for virion assembly/budding. This Measles virus (strain Edmonston-AIK-C vaccine) (MeV) protein is Matrix protein (M).